A 178-amino-acid chain; its full sequence is Probetacellulin (178 aa).

A signal peptide spans 1-31; the sequence is MARAAPGSGASPLPLLPALALGLVILHCVVA. Over 32–118 the chain is Extracellular; it reads DGNSTRSPED…LFYLRGDRGQ (87 aa). Residue Asn-34 is glycosylated (N-linked (GlcNAc...) asparagine). The EGF-like domain occupies 65–105; that stretch reads HFSRCPKQYKHYCIKGRCRFVVAEQTPSCVCDEGYAGARCE. Intrachain disulfides connect Cys-69/Cys-82, Cys-77/Cys-93, and Cys-95/Cys-104. A propeptide spans 112-178 (removed in mature form); the sequence is LRGDRGQILV…NDDIQETSIA (67 aa). The helical transmembrane segment at 119–139 threads the bilayer; that stretch reads ILVICLIAVMVIFIILVVSIC. Residues 140 to 178 lie on the Cytoplasmic side of the membrane; it reads TCCHPLRKRRKRRKKEEEMETLGKDITPINDDIQETSIA.

In terms of assembly, monomer. Interacts with EGFR and ERBB4. In terms of tissue distribution, expressed in a wide range of tissues, including the mammary gland.

It localises to the secreted. The protein localises to the extracellular space. Its subcellular location is the cell membrane. In terms of biological role, growth factor that binds to EGFR, ERBB4 and other EGF receptor family members. Potent mitogen for retinal pigment epithelial cells and vascular smooth muscle cells. In Bos taurus (Bovine), this protein is Probetacellulin (BTC).